The chain runs to 209 residues: A-type ATP synthase subunit D (209 aa).

Belongs to the V-ATPase D subunit family. Has multiple subunits with at least A(3), B(3), C, D, E, F, H, I and proteolipid K(x).

Its subcellular location is the cell membrane. Component of the A-type ATP synthase that produces ATP from ADP in the presence of a proton gradient across the membrane. The sequence is that of A-type ATP synthase subunit D from Archaeoglobus fulgidus (strain ATCC 49558 / DSM 4304 / JCM 9628 / NBRC 100126 / VC-16).